The sequence spans 262 residues: Translation initiation factor 2 subunit alpha (262 aa).

One can recognise an S1 motif domain in the interval 15-86 (GELVVGTVHK…RKGHVDVSMK (72 aa)).

This sequence belongs to the eIF-2-alpha family. As to quaternary structure, heterotrimer composed of an alpha, a beta and a gamma chain.

In terms of biological role, eIF-2 functions in the early steps of protein synthesis by forming a ternary complex with GTP and initiator tRNA. The protein is Translation initiation factor 2 subunit alpha (eif2a) of Methanothermobacter thermautotrophicus (strain ATCC 29096 / DSM 1053 / JCM 10044 / NBRC 100330 / Delta H) (Methanobacterium thermoautotrophicum).